Reading from the N-terminus, the 135-residue chain is MTMTDPIADMLTRLRNANQAYHDQTSMPHSKIKAGIAGILKSEGYIADYKVNEPKEGEVGKTLTLTLKYGENRERSIAGVRRISKPGLRVYAKSTALPKVLGGLGIAIISTSQGLLTDKQAHEKSVGGEVLAYVW.

The protein belongs to the universal ribosomal protein uS8 family. As to quaternary structure, part of the 30S ribosomal subunit. Contacts proteins S5 and S12.

Functionally, one of the primary rRNA binding proteins, it binds directly to 16S rRNA central domain where it helps coordinate assembly of the platform of the 30S subunit. The protein is Small ribosomal subunit protein uS8 of Cutibacterium acnes (strain DSM 16379 / KPA171202) (Propionibacterium acnes).